Consider the following 629-residue polypeptide: Pentatricopeptide repeat-containing protein At1g63150 (629 aa).

PPR repeat units lie at residues 46–81 (ASGDYREILRNRLSDIIKVDDAVDLFGDMVKSRPFP), 82–116 (SIVEFNKLLSAVAKMNKFELVISLGEQMQTLGISH), 117–151 (DLYTYSIFINCFCRRSQLSLALAVLAKMMKLGYEP), 152–186 (DIVTLSSLLNGYCHSKRISDAVALVDQMVEMGYKP), 187–221 (DTFTFTTLIHGLFLHNKASEAVALVDQMVQRGCQP), 222–256 (DLVTYGTVVNGLCKRGDIDLALNLLNKMEAARIKA), 257–291 (NVVIFNTIIDSLCKYRHVEVAVDLFTEMETKGIRP), 292–326 (NVVTYNSLINCLCNYGRWSDASRLLSNMLEKKINP), 327–361 (NVVTFNALIDAFFKEGKLVEAEKLHEEMIQRSIDP), 362–396 (DTITYNLLINGFCMHNRLDEAKQMFKFMVSKDCLP), 397–431 (NIQTYNTLINGFCKCKRVEDGVELFREMSQRGLVG), 432–466 (NTVTYTTIIQGFFQAGDCDSAQMVFKQMVSNRVPT), 467–501 (DIMTYSILLHGLCSYGKLDTALVIFKYLQKSEMEL), 502–532 (NIFIYNTMIEGMCKAGKVGEAWDLFCSLSIK), 534–568 (DVVTYNTMISGLCSKRLLQEADDLFRKMKEDGTLP), and 569–603 (NSGTYNTLIRANLRDCDRAASAELIKEMRSSGFVG).

It belongs to the PPR family. P subfamily.

This chain is Pentatricopeptide repeat-containing protein At1g63150, found in Arabidopsis thaliana (Mouse-ear cress).